Consider the following 475-residue polypeptide: Ribulose bisphosphate carboxylase large chain (475 aa).

A propeptide spanning residues 1–2 (MS) is cleaved from the precursor. The residue at position 3 (Pro3) is an N-acetylproline. The residue at position 14 (Lys14) is an N6,N6,N6-trimethyllysine. Substrate is bound by residues Asn123 and Thr173. The Proton acceptor role is filled by Lys175. Lys177 contributes to the substrate binding site. Mg(2+) is bound by residues Lys201, Asp203, and Glu204. An N6-carboxylysine modification is found at Lys201. His294 functions as the Proton acceptor in the catalytic mechanism. Substrate-binding residues include Arg295, His327, and Ser379.

This sequence belongs to the RuBisCO large chain family. Type I subfamily. In terms of assembly, heterohexadecamer of 8 large chains and 8 small chains; disulfide-linked. The disulfide link is formed within the large subunit homodimers. Requires Mg(2+) as cofactor. The disulfide bond which can form in the large chain dimeric partners within the hexadecamer appears to be associated with oxidative stress and protein turnover.

It is found in the plastid. Its subcellular location is the chloroplast. It carries out the reaction 2 (2R)-3-phosphoglycerate + 2 H(+) = D-ribulose 1,5-bisphosphate + CO2 + H2O. The enzyme catalyses D-ribulose 1,5-bisphosphate + O2 = 2-phosphoglycolate + (2R)-3-phosphoglycerate + 2 H(+). Its function is as follows. RuBisCO catalyzes two reactions: the carboxylation of D-ribulose 1,5-bisphosphate, the primary event in carbon dioxide fixation, as well as the oxidative fragmentation of the pentose substrate in the photorespiration process. Both reactions occur simultaneously and in competition at the same active site. The chain is Ribulose bisphosphate carboxylase large chain from Carica papaya (Papaya).